The following is a 255-amino-acid chain: Mediator of RNA polymerase II transcription subunit 18 (255 aa).

This sequence belongs to the Mediator complex subunit 18 family. As to quaternary structure, component of the Mediator complex.

It is found in the nucleus. Functionally, component of the Mediator complex, a coactivator involved in the regulated transcription of nearly all RNA polymerase II-dependent genes. Mediator functions as a bridge to convey information from gene-specific regulatory proteins to the basal RNA polymerase II transcription machinery. Mediator is recruited to promoters by direct interactions with regulatory proteins and serves as a scaffold for the assembly of a functional preinitiation complex with RNA polymerase II and the general transcription factors. The sequence is that of Mediator of RNA polymerase II transcription subunit 18 (SRB5) from Kluyveromyces lactis (strain ATCC 8585 / CBS 2359 / DSM 70799 / NBRC 1267 / NRRL Y-1140 / WM37) (Yeast).